The primary structure comprises 473 residues: MARTLYDKIWDEHVVHTEEDGTAILYIDRHLVHEVTSPQAFEGLREAGRKLWRISSVVATADHNTPTTGWERGYEGIADPTSKEQVTTLDKNIAEFGAAAFFPFLSKRQGIVHVIGPESGATLPGMTVVCGDSHTSTHGAFGALAHGIGTSEVEHVMATQTLLGKKAKNMLVKVEGKLPFGCTAKDIVLAIIGKIGTAGGTGYTIEFAGSAIRDLSMEGRMTVCNMAIEAGARAGLVAVDEKTIGYIKGRPLAPTGVEWDQAVAYWRTLQSDPDAAFDAVVELDATQIQPQVTWGTSPEMVVDINGRVPDPDKEKDASKRSAIERALVYMGLEPNKAMNDIFIDKVFIGSCTNSRIEDMREAAAVVKKLGQKVAKNVKLAMVVPGSGVVKEQAEREGLDVIFKAAGFEWREPGCSMCLAMNADRLEPGERCASTSNRNFEGRQGAGGRTHLVSPAMAAAAAVHGHFVDVRTFA.

[4Fe-4S] cluster-binding residues include Cys-351, Cys-414, and Cys-417.

It belongs to the aconitase/IPM isomerase family. LeuC type 1 subfamily. As to quaternary structure, heterodimer of LeuC and LeuD. It depends on [4Fe-4S] cluster as a cofactor.

The catalysed reaction is (2R,3S)-3-isopropylmalate = (2S)-2-isopropylmalate. Its pathway is amino-acid biosynthesis; L-leucine biosynthesis; L-leucine from 3-methyl-2-oxobutanoate: step 2/4. Its function is as follows. Catalyzes the isomerization between 2-isopropylmalate and 3-isopropylmalate, via the formation of 2-isopropylmaleate. In Variovorax paradoxus (strain S110), this protein is 3-isopropylmalate dehydratase large subunit.